A 487-amino-acid polypeptide reads, in one-letter code: Zinc finger and BTB domain-containing protein 32 (487 aa).

Residues 29–87 (CDTLITVGSQEFPAHSLVLAGVSQQLGRRGQWALGEGISPSTFAQLLNFVYGESVELQP) form the BTB domain. A compositionally biased stretch (basic and acidic residues) spans 112 to 166 (ARGDRAKKPDPGLKKHQEEPEKPSRNPERELGDPGEKQKPEQVSRTGGREQEMLH). 2 disordered regions span residues 112–244 (ARGD…TSVT) and 308–371 (QNQL…ARSR). Residues 308–320 (QNQLASSSPTPGS) are compositionally biased toward polar residues. Pro residues predominate over residues 357–369 (PPRPHPPPAPPAR). C2H2-type zinc fingers lie at residues 373–395 (YACS…YRVH), 401–423 (FSCS…LRTH), and 428–450 (YRCS…MRGH). The tract at residues 468 to 487 (SSSRPSRPSTSPCCPSSSTT) is disordered.

The protein belongs to the krueppel C2H2-type zinc-finger protein family. As to quaternary structure, homodimer (via PTB domain). Interacts with the N-terminal of FANCC. Interacts with ZBTB16. Interacts with GATA3. In terms of tissue distribution, predominantly expressed in testis. Some isoforms are ubiquitously expressed.

Its subcellular location is the nucleus. DNA-binding protein that binds to the to a 5'-TGTACAGTGT-3' core sequence. May function as a transcriptional transactivator and transcriptional repressor. Probably exerts its repressor effect by preventing GATA3 from binding to DNA. May play a role in regulating the differentiation and activation of helper T-cells. The protein is Zinc finger and BTB domain-containing protein 32 (ZBTB32) of Homo sapiens (Human).